The primary structure comprises 703 residues: Pentatricopeptide repeat-containing protein At1g22830 (703 aa).

PPR repeat units follow at residues 82–116 (VLYS…GLEF), 117–147 (DSVL…SEIL), 148–182 (HPLP…GIRA), 183–217 (DEFT…SHRC), 218–248 (NLYV…MSER), 249–283 (DAVS…GVEA), 284–318 (SIVT…NVRI), 319–353 (GSVA…CSFS), 356–386 (IDNV…VEAN), 387–421 (SLST…GFHP), 422–452 (NHIT…ILRR), 458–488 (CLIL…MRKR), 489–523 (DKVT…GIKP), 524–554 (DHVT…MEHV), and 560–594 (RLEH…PSSA). Positions 595 to 671 (MCATLLKACL…AHEFALMETD (77 aa)) are type E motif. A disordered region spans residues 671 to 703 (DSELDGENNKPMNDDSVINQEQSSDEERLVEVG).

This sequence belongs to the PPR family. PCMP-E subfamily.

In Arabidopsis thaliana (Mouse-ear cress), this protein is Pentatricopeptide repeat-containing protein At1g22830 (PCMP-E24).